The chain runs to 79 residues: Beta-defensin 130 (79 aa).

The signal sequence occupies residues 1–22 (MKLHSLISVLLLFVTLIPKGKT). Intrachain disulfides connect Cys38–Cys53 and Cys43–Cys60.

It belongs to the beta-defensin family.

Its subcellular location is the secreted. Its function is as follows. Antimicrobial host-defense peptide. This chain is Beta-defensin 130, found in Pan troglodytes (Chimpanzee).